The chain runs to 148 residues: Lysozyme C (148 aa).

The N-terminal stretch at 1–18 (MKAVIILGLVLLSVTVQG) is a signal peptide. In terms of domain architecture, C-type lysozyme spans 19 to 148 (KIFERCELAR…VSQYVQGCGV (130 aa)). 4 cysteine pairs are disulfide-bonded: C24-C146, C48-C134, C83-C99, and C95-C113. Catalysis depends on residues E53 and D71.

This sequence belongs to the glycosyl hydrolase 22 family. Monomer.

It carries out the reaction Hydrolysis of (1-&gt;4)-beta-linkages between N-acetylmuramic acid and N-acetyl-D-glucosamine residues in a peptidoglycan and between N-acetyl-D-glucosamine residues in chitodextrins.. Functionally, lysozymes have primarily a bacteriolytic function; those in tissues and body fluids are associated with the monocyte-macrophage system and enhance the activity of immunoagents. The polypeptide is Lysozyme C (LYZ) (Erythrocebus patas (Red guenon)).